The sequence spans 540 residues: Chaperonin GroEL 3 (540 aa).

Residues 30-33 (TLGP), K51, 87-91 (DGTTT), G415, 479-481 (NAA), and D495 each bind ATP.

The protein belongs to the chaperonin (HSP60) family. Forms a cylinder of 14 subunits composed of two heptameric rings stacked back-to-back. Interacts with the co-chaperonin GroES.

It is found in the cytoplasm. It catalyses the reaction ATP + H2O + a folded polypeptide = ADP + phosphate + an unfolded polypeptide.. Together with its co-chaperonin GroES, plays an essential role in assisting protein folding. The GroEL-GroES system forms a nano-cage that allows encapsulation of the non-native substrate proteins and provides a physical environment optimized to promote and accelerate protein folding. This chain is Chaperonin GroEL 3, found in Burkholderia cenocepacia (strain HI2424).